The primary structure comprises 217 residues: MOB kinase activator 3A (217 aa).

The Zn(2+) site is built by Cys83, Cys88, His165, and His170.

It belongs to the MOB1/phocein family.

Functionally, may regulate the activity of kinases. In Pongo abelii (Sumatran orangutan), this protein is MOB kinase activator 3A (MOB3A).